The sequence spans 560 residues: Formate--tetrahydrofolate ligase (560 aa).

Threonine 69–serine 76 serves as a coordination point for ATP.

The protein belongs to the formate--tetrahydrofolate ligase family.

It catalyses the reaction (6S)-5,6,7,8-tetrahydrofolate + formate + ATP = (6R)-10-formyltetrahydrofolate + ADP + phosphate. The protein operates within one-carbon metabolism; tetrahydrofolate interconversion. In Listeria monocytogenes serotype 4a (strain HCC23), this protein is Formate--tetrahydrofolate ligase.